Reading from the N-terminus, the 295-residue chain is Beta-lactamase-like protein 2 homolog (295 aa).

Histidine 79, histidine 81, aspartate 83, histidine 84, histidine 141, aspartate 160, and histidine 195 together coordinate Zn(2+).

It belongs to the metallo-beta-lactamase superfamily. Glyoxalase II family.

The protein is Beta-lactamase-like protein 2 homolog of Caenorhabditis elegans.